A 452-amino-acid polypeptide reads, in one-letter code: Trigger factor (452 aa).

The PPIase FKBP-type domain maps to 171-256; sequence GDRVTVSFKG…ATKLEAPQET (86 aa).

Belongs to the FKBP-type PPIase family. Tig subfamily.

It localises to the cytoplasm. It catalyses the reaction [protein]-peptidylproline (omega=180) = [protein]-peptidylproline (omega=0). Its function is as follows. Involved in protein export. Acts as a chaperone by maintaining the newly synthesized protein in an open conformation. Functions as a peptidyl-prolyl cis-trans isomerase. This is Trigger factor from Rhodopseudomonas palustris (strain ATCC BAA-98 / CGA009).